The following is a 214-amino-acid chain: Membrane-spanning 4-domains subfamily A member 3 (214 aa).

Residues 1–31 form a disordered region; that stretch reads MASHEVDNAELGSASAHGTPGSEAGPEELNT. The Cytoplasmic portion of the chain corresponds to 1-49; that stretch reads MASHEVDNAELGSASAHGTPGSEAGPEELNTSVYQPIDGSPDYQKAKLQ. A helical transmembrane segment spans residues 50–70; the sequence is VLGAIQILNAAMILALGVFLG. Residues 71 to 81 are Extracellular-facing; sequence SLQYPYHFQKH. The helical transmembrane segment at 82–102 threads the bilayer; sequence FFFFTFYTGYPIWGAVFFCSS. The Cytoplasmic portion of the chain corresponds to 103-124; that stretch reads GTLSVVAGIKPTRTWIQNSFGM. Residues 125–145 form a helical membrane-spanning segment; that stretch reads NIASATIALVGTAFLSLNIAV. The Extracellular segment spans residues 146–175; it reads NIQSLRSCHSSSESPDLCNYMGSISNGMVS. Residues 176 to 196 traverse the membrane as a helical segment; sequence LLLILTLLELCVTISTIAMWC. The Cytoplasmic segment spans residues 197–214; it reads NANCCNSREEISSPPNSV.

It belongs to the MS4A family. Interacts with CDKN3. Interacts with CDKN3-CDK2 complexes through its binding to CDKN3; this interaction facilitates dissociation of cyclin A from CDKN3-CDK2 complexes. In terms of tissue distribution, expressed specifically in hematopoietic cells and tissues.

The protein localises to the endomembrane system. It is found in the cytoplasm. The protein resides in the perinuclear region. Hematopoietic modulator for the G1-S cell cycle transition. Modulates the level of phosphorylation of cyclin-dependent kinase 2 (CDK2) through its direct binding to cyclin-dependent kinase inhibitor 3 (CDKN3/KAP). The protein is Membrane-spanning 4-domains subfamily A member 3 (MS4A3) of Homo sapiens (Human).